The sequence spans 123 residues: Large ribosomal subunit protein bL12 (123 aa).

This sequence belongs to the bacterial ribosomal protein bL12 family. Homodimer. Part of the ribosomal stalk of the 50S ribosomal subunit. Forms a multimeric L10(L12)X complex, where L10 forms an elongated spine to which 2 to 4 L12 dimers bind in a sequential fashion. Binds GTP-bound translation factors.

In terms of biological role, forms part of the ribosomal stalk which helps the ribosome interact with GTP-bound translation factors. Is thus essential for accurate translation. The protein is Large ribosomal subunit protein bL12 of Laribacter hongkongensis (strain HLHK9).